The following is a 380-amino-acid chain: N-acetylcysteine deacetylase (380 aa).

Cysteine 98, histidine 100, glutamate 134, histidine 158, and histidine 350 together coordinate Ni(2+).

The protein belongs to the peptidase M20 family. It depends on a divalent metal cation as a cofactor.

The enzyme catalyses N-acetyl-L-cysteine + H2O = L-cysteine + acetate. The protein operates within amino-acid biosynthesis; L-cysteine biosynthesis. Its function is as follows. Probably catalyzes the deacetylation of N-acetylcysteine (NAC) to acetate and cysteine. Is involved in a S-(2-succino)cysteine (2SC) degradation pathway that allows B.subtilis to grow on 2SC as a sole sulfur source, via its metabolization to cysteine. This chain is N-acetylcysteine deacetylase, found in Bacillus subtilis (strain 168).